A 471-amino-acid polypeptide reads, in one-letter code: Nuclear receptor subfamily 0 group B member 1 (471 aa).

3 consecutive repeat copies span residues 1–67 (MAGE…YRCC), 68–134 (FCGE…YRCC), and 135–201 (FCGE…YRCC). The 4 X 67 AA tandem repeats stretch occupies residues 1 to 253 (MAGEDHQWQG…QRVALKSPQV (253 aa)). 3 consecutive short sequence motifs (LXXLL motif) follow at residues 13–17 (LYNML), 80–84 (LYNML), and 147–151 (LYSLL). Residues 202–253 (FCGEDHPRQSGILCNMPMSAKQTHVAPEAQPGAPWWDPSCAAQRVALKSPQV) form a 4; truncated repeat. Residues 210 to 470 (QSGILCNMPM…DMMLEMLCAK (261 aa)) form the NR LBD domain. The short motif at 462–467 (MMLEML) is the AF-2 motif element.

It belongs to the nuclear hormone receptor family. NR0 subfamily. Homodimer. Interacts with NR5A1, NR5A2, NR0B2 and with COPS2. Interacts with ESRRB; represses ESRRB activity at the GATA6 promoter.

Its subcellular location is the nucleus. It localises to the cytoplasm. Its function is as follows. Nuclear receptor that lacks a DNA-binding domain and acts as a corepressor that inhibits the transcriptional activity of other nuclear receptors through heterodimeric interactions. Component of a cascade required for the development of the hypothalamic-pituitary-adrenal-gonadal axis. May also have a role in the development of the embryo and in the maintenance of embryonic stem cell pluripotency. The polypeptide is Nuclear receptor subfamily 0 group B member 1 (NR0B1) (Sus scrofa (Pig)).